Reading from the N-terminus, the 411-residue chain is DNA polymerase IV (411 aa).

The UmuC domain occupies 18–211 (VVHVDMDCFY…LDVADLHGVG (194 aa)). Asp22 and Asp130 together coordinate Mg(2+). Residue Glu131 is part of the active site. Disordered regions lie at residues 248–280 (FHRR…GATE) and 376–411 (GFSG…DEFT). The segment covering 253–274 (RGADSRPVEPRGKPKSLSRESS) has biased composition (basic and acidic residues). Residues 384–402 (DGGGHEGGACGGAGRGSCG) are compositionally biased toward gly residues.

This sequence belongs to the DNA polymerase type-Y family. In terms of assembly, monomer. Requires Mg(2+) as cofactor.

Its subcellular location is the cytoplasm. The catalysed reaction is DNA(n) + a 2'-deoxyribonucleoside 5'-triphosphate = DNA(n+1) + diphosphate. Poorly processive, error-prone DNA polymerase involved in untargeted mutagenesis. Copies undamaged DNA at stalled replication forks, which arise in vivo from mismatched or misaligned primer ends. These misaligned primers can be extended by PolIV. Exhibits no 3'-5' exonuclease (proofreading) activity. May be involved in translesional synthesis. This chain is DNA polymerase IV, found in Halobacterium salinarum (strain ATCC 29341 / DSM 671 / R1).